Consider the following 829-residue polypeptide: Disintegrin and metalloproteinase domain-containing protein 23 (829 aa).

The first 55 residues, 1 to 55, serve as a signal peptide directing secretion; that stretch reads MKPPGSISRRPTLTGCSLPGASCGPGRCPAGPVPARAPPCRLLLVLLLLPALATS. The propeptide occupies 56–283; it reads SRPRARGAAA…ELQWLRRRKR (228 aa). N-linked (GlcNAc...) asparagine glycosylation is found at Asn-72, Asn-92, Asn-97, and Asn-260. Over 284 to 789 the chain is Extracellular; the sequence is AVNPSRGVFE…EGPKGPSATN (506 aa). A Peptidase M12B domain is found at 296-493; the sequence is KYLELMIVND…GGGACLFNRP (198 aa). Intrachain disulfides connect Cys-405–Cys-488, Cys-447–Cys-472, and Cys-449–Cys-456. The 87-residue stretch at 499-585 folds into the Disintegrin domain; sequence PTECGNGYVE…QCPPNLHKQD (87 aa). N-linked (GlcNAc...) asparagine glycosylation is found at Asn-544 and Asn-545. Cys-557 and Cys-577 are joined by a disulfide. 2 N-linked (GlcNAc...) asparagine glycosylation sites follow: Asn-661 and Asn-729. One can recognise an EGF-like domain in the interval 729–766; that stretch reads NMSSCPLDSRGKVCSGHGVCSNEATCICDFTWAGTDCS. Intrachain disulfides connect Cys-733–Cys-748, Cys-742–Cys-754, and Cys-756–Cys-765. Residues 790–810 traverse the membrane as a helical segment; the sequence is LIIGSIAGAILVAAIVLGGTG. The Cytoplasmic segment spans residues 811–829; that stretch reads WGFKNVKKRRFDPTQQGPI.

In terms of assembly, can bind to LGI1 and LGI4. As to expression, brain specific.

It is found in the cell membrane. The protein resides in the secreted. Its function is as follows. May play a role in cell-cell and cell-matrix interactions. This is a non-catalytic metalloprotease-like protein. The chain is Disintegrin and metalloproteinase domain-containing protein 23 (Adam23) from Mus musculus (Mouse).